Consider the following 190-residue polypeptide: UPF0232 protein SCO3875 (190 aa).

Disordered regions lie at residues 1-70 (MSAD…GRDP) and 163-190 (GPGG…DTYG). Over residues 26–35 (GVDLARVALR) the composition is skewed to low complexity. The span at 36 to 45 (AAREAARARG) shows a compositional bias: basic and acidic residues. Gly residues predominate over residues 163-172 (GPGGPGGPGR).

This sequence belongs to the UPF0232 family.

The chain is UPF0232 protein SCO3875 from Streptomyces coelicolor (strain ATCC BAA-471 / A3(2) / M145).